Reading from the N-terminus, the 242-residue chain is Glycerol-3-phosphate acyltransferase (242 aa).

Helical transmembrane passes span 7–27 (ISLLVILSLLIGYLFGSIMFA), 61–81 (IAIGFFEIIKSVIPFSIILLI), 102–122 (YYLTYLAPLAAIFGHMYPVYF), 135–155 (GFVFVVSPWWFLIIALTWWTI), 162–182 (VSLASIVCFIIFLFLPYIPWL), and 201–221 (DWYIIVFFAIANTILSTIIIW).

The protein belongs to the PlsY family. As to quaternary structure, probably interacts with PlsX.

The protein resides in the cell membrane. It carries out the reaction an acyl phosphate + sn-glycerol 3-phosphate = a 1-acyl-sn-glycero-3-phosphate + phosphate. The protein operates within lipid metabolism; phospholipid metabolism. Catalyzes the transfer of an acyl group from acyl-phosphate (acyl-PO(4)) to glycerol-3-phosphate (G3P) to form lysophosphatidic acid (LPA). This enzyme utilizes acyl-phosphate as fatty acyl donor, but not acyl-CoA or acyl-ACP. The polypeptide is Glycerol-3-phosphate acyltransferase (Mycoplasmoides gallisepticum (strain R(low / passage 15 / clone 2)) (Mycoplasma gallisepticum)).